The following is an 86-amino-acid chain: Small ribosomal subunit protein bS16 (86 aa).

It belongs to the bacterial ribosomal protein bS16 family.

The chain is Small ribosomal subunit protein bS16 from Xylella fastidiosa (strain 9a5c).